The sequence spans 601 residues: MQNELLDDPMDTGAPAAEAAAADEPLPPAHGIDREVTPKPAGNPDLMQQSLDNPAIPMHLIEKRDDRRESCDDGYSLTVNESAIDIESLACSYDSNAFFLRARFIARHCPILRADAYISLINYLKEHTTDITHYVAFFNELESELARKEFKNRQLNFQIPLRDQKWIEENGATWQSTTDQLQAEYKRHKDEGVKESTRRAMEDLFQHYMMAGKIDEAIRLYSRGIRDYCTQLKHSINMWINWMEVAICANDWGKLDTVTNTAYRSLKDADDAEKNSQQSQQAPPQRGENAPYMVERDPNAPIQTLTNRQLIETALAKCLAAQVLLKLRNKRYSQVVETILQIKTECLQSKWFVTSSDLGIYGMLSAMATMSRADLKLQVSGNGTFRKLLESEPQLIELLGSYTSSRFGRCFEIMRSVKPRLLLDPFISRNVDELFEKIRQKCVLQYLQPYSTIKMATMAEAVGMSSAELQLSLLELIEQKHVSLKIDQNEGIVRILDERDENAILKRVNVTCDRATQKAKSLLWKTTLAGANIHSISDKETRPKRKNQKESAKFDRNFGGIDVDEDPRGIAGPSGLSDDFNIAYDQQPQQQVQYLEDLGDI.

The span at M1–M10 shows a compositional bias: acidic residues. Disordered stretches follow at residues M1 to P54 and D268 to V294. Residues A14–E24 are compositionally biased toward low complexity. Residues T338 to D500 enclose the PCI domain. Residues S535–N581 are disordered.

The protein belongs to the CSN1 family. Component of the CSN complex, probably composed of csn-1, csn-2, csn-3, csn-4, csn-5, csn-6 and csn-7. Within the complex it probably interacts directly with csn-2, csn-4 and csn-5. May interact with itself. Interacts with rbx-1.

It is found in the cytoplasm. It localises to the nucleus. Functionally, essential component of the COP9 signalosome complex (CSN), a complex involved in various cellular and developmental processes. The CSN complex is an essential regulator of the ubiquitin (Ubl) conjugation pathway by mediating the deneddylation of the cullin subunits of the SCF-type E3 ligase complexes, leading to decrease the Ubl ligase activity of SCF. The CSN complex plays an essential role in embryogenesis and oogenesis and is required to regulate microtubule stability in the early embryo. Mediates mei-3/katanin targeting for degradation at the meiosis to mitosis transition via deneddylation of cul-3. This is COP9 signalosome complex subunit 1 (csn-1) from Caenorhabditis elegans.